Consider the following 179-residue polypeptide: Alpha-tubulin N-acetyltransferase (179 aa).

The N-acetyltransferase domain occupies 1–175 (MRVEVVRAPG…NRFVVFDAYF (175 aa)). Acetyl-CoA-binding positions include 109–122 (FYVD…GVGL) and 145–154 (SPKLFAFLKK).

It belongs to the acetyltransferase ATAT1 family.

It catalyses the reaction L-lysyl-[alpha-tubulin] + acetyl-CoA = N(6)-acetyl-L-lysyl-[alpha-tubulin] + CoA + H(+). Functionally, specifically acetylates 'Lys-40' in alpha-tubulin on the lumenal side of microtubules. Promotes microtubule destabilization and accelerates microtubule dynamics; this activity may be independent of acetylation activity. Acetylates alpha-tubulin with a slow enzymatic rate, due to a catalytic site that is not optimized for acetyl transfer. Enters the microtubule through each end and diffuses quickly throughout the lumen of microtubules. Acetylates only long/old microtubules because of its slow acetylation rate since it does not have time to act on dynamically unstable microtubules before the enzyme is released. The chain is Alpha-tubulin N-acetyltransferase from Phytophthora infestans (strain T30-4) (Potato late blight agent).